We begin with the raw amino-acid sequence, 624 residues long: Phosphomethylpyrimidine synthase (624 aa).

The tract at residues 48 to 70 (SDTHTSQGREKNPPLTVYDTSGP) is disordered. Substrate contacts are provided by residues asparagine 229, methionine 258, tyrosine 287, histidine 323, 343 to 345 (SRG), 384 to 387 (DGLR), and glutamate 423. Residue histidine 427 participates in Zn(2+) binding. Tyrosine 450 serves as a coordination point for substrate. Histidine 491 is a Zn(2+) binding site. Positions 571, 574, and 579 each coordinate [4Fe-4S] cluster.

This sequence belongs to the ThiC family. As to quaternary structure, homodimer. The cofactor is [4Fe-4S] cluster.

It carries out the reaction 5-amino-1-(5-phospho-beta-D-ribosyl)imidazole + S-adenosyl-L-methionine = 4-amino-2-methyl-5-(phosphooxymethyl)pyrimidine + CO + 5'-deoxyadenosine + formate + L-methionine + 3 H(+). It participates in cofactor biosynthesis; thiamine diphosphate biosynthesis. Catalyzes the synthesis of the hydroxymethylpyrimidine phosphate (HMP-P) moiety of thiamine from aminoimidazole ribotide (AIR) in a radical S-adenosyl-L-methionine (SAM)-dependent reaction. The protein is Phosphomethylpyrimidine synthase of Nitrosococcus oceani (strain ATCC 19707 / BCRC 17464 / JCM 30415 / NCIMB 11848 / C-107).